The sequence spans 460 residues: GTPase Der (460 aa).

2 EngA-type G domains span residues 2-164 and 199-370; these read KKVI…DDEI and IKVG…ANFT. Residues 8 to 15, 55 to 59, 116 to 119, 205 to 212, 252 to 256, and 316 to 319 each bind GTP; these read GRPNVGKS, DSGGL, NKID, GRVNVGKS, DTAGI, and NKWD. In terms of domain architecture, KH-like spans 371-454; the sequence is QKIATSKLND…PVILLPRKRG (84 aa).

The protein belongs to the TRAFAC class TrmE-Era-EngA-EngB-Septin-like GTPase superfamily. EngA (Der) GTPase family. In terms of assembly, associates with the 50S ribosomal subunit.

Its function is as follows. GTPase that plays an essential role in the late steps of ribosome biogenesis. This Campylobacter hominis (strain ATCC BAA-381 / DSM 21671 / CCUG 45161 / LMG 19568 / NCTC 13146 / CH001A) protein is GTPase Der.